Here is a 40-residue protein sequence, read N- to C-terminus: Photosystem II reaction center protein J (40 aa).

The chain crosses the membrane as a helical span at residues 8-28 (IPLWLIGTVTGILVIGLLGIF).

This sequence belongs to the PsbJ family. PSII is composed of 1 copy each of membrane proteins PsbA, PsbB, PsbC, PsbD, PsbE, PsbF, PsbH, PsbI, PsbJ, PsbK, PsbL, PsbM, PsbT, PsbX, PsbY, PsbZ, Psb30/Ycf12, at least 3 peripheral proteins of the oxygen-evolving complex and a large number of cofactors. It forms dimeric complexes.

It is found in the plastid. The protein resides in the chloroplast thylakoid membrane. Functionally, one of the components of the core complex of photosystem II (PSII). PSII is a light-driven water:plastoquinone oxidoreductase that uses light energy to abstract electrons from H(2)O, generating O(2) and a proton gradient subsequently used for ATP formation. It consists of a core antenna complex that captures photons, and an electron transfer chain that converts photonic excitation into a charge separation. The sequence is that of Photosystem II reaction center protein J from Angiopteris evecta (Mule's foot fern).